An 876-amino-acid chain; its full sequence is Leucine--tRNA ligase (876 aa).

Residues 43–53 (PYPSGRIHMGH) carry the 'HIGH' region motif. The short motif at 632–636 (KMSKS) is the 'KMSKS' region element. ATP is bound at residue Lys635.

The protein belongs to the class-I aminoacyl-tRNA synthetase family.

The protein resides in the cytoplasm. It catalyses the reaction tRNA(Leu) + L-leucine + ATP = L-leucyl-tRNA(Leu) + AMP + diphosphate. This is Leucine--tRNA ligase from Rhizobium etli (strain CIAT 652).